The following is a 159-amino-acid chain: 17 kDa surface antigen (159 aa).

Residues 1–19 (MKIISKIIVILLAASMLQA) form the signal peptide. The N-palmitoyl cysteine moiety is linked to residue cysteine 20. A lipid anchor (S-diacylglycerol cysteine) is attached at cysteine 20.

It belongs to the rickettsiale 17 kDa surface antigen family.

It localises to the cell outer membrane. The protein is 17 kDa surface antigen (omp) of Rickettsia bellii.